The sequence spans 142 residues: Ribosome-binding factor A (142 aa).

The disordered stretch occupies residues 123-142 (VQRDLDSAPEDDEPETGTGH). Acidic residues predominate over residues 129-142 (SAPEDDEPETGTGH).

Belongs to the RbfA family. As to quaternary structure, monomer. Binds 30S ribosomal subunits, but not 50S ribosomal subunits or 70S ribosomes.

The protein localises to the cytoplasm. One of several proteins that assist in the late maturation steps of the functional core of the 30S ribosomal subunit. Associates with free 30S ribosomal subunits (but not with 30S subunits that are part of 70S ribosomes or polysomes). Required for efficient processing of 16S rRNA. May interact with the 5'-terminal helix region of 16S rRNA. This chain is Ribosome-binding factor A, found in Methylobacterium radiotolerans (strain ATCC 27329 / DSM 1819 / JCM 2831 / NBRC 15690 / NCIMB 10815 / 0-1).